The primary structure comprises 393 residues: Purine permease 14 (393 aa).

Residue alanine 2 is modified to N-acetylalanine. 10 helical membrane passes run 46–66 (WPTI…AKLL), 90–110 (TQSL…LIFI), 133–153 (LAVI…LAAM), 161–181 (GVFT…AAFI), 189–209 (WVVI…SSSF), 225–245 (WAAL…QNVF), 268–288 (VIIF…LIAG), 308–328 (VMAM…IVGL), 339–359 (VISV…FNFM), and 363–383 (FDAF…AYFF).

This sequence belongs to the purine permeases (TC 2.A.7.14) family. In terms of tissue distribution, expressed in seedlings, leaves, embryos, ovules, seeds and the root and shoot meristems. In heart-stage embryos, detected in cells that failed to respond to cytokinins, including the prospective cotyledons.

It is found in the cell membrane. In terms of biological role, purine permease implicated in ATP-dependent cytokinin translocation that controls the spatiotemporal landscape of cytokinin signaling. Depletes ligands from the apoplast, which leads to a suppression of the cytokinin response. This Arabidopsis thaliana (Mouse-ear cress) protein is Purine permease 14.